The sequence spans 213 residues: MTSKKSYKSYFFDPLWSNNQILIAILGICSALAVTTTVQTAITMGIAVSIVTGCSSFFVSLLRKFTPDSVRMITQLIIISLFVIVIDQFLKAFFFDISKTLSVFVGLIITNCIVMGRSESLARHVTPIPAFLDGFASGLGYGWVLLVIGVIRELFGFGTLMGFRIIPQFVYASETHPDGYQNLSLMVLAPSAFFLLGIMIWLVNIRDSKKRKR.

The next 7 helical transmembrane spans lie at 21-41 (ILIAILGICSALAVTTTVQTA), 42-62 (ITMGIAVSIVTGCSSFFVSLL), 77-97 (IIISLFVIVIDQFLKAFFFDI), 101-121 (LSVFVGLIITNCIVMGRSESL), 131-151 (FLDGFASGLGYGWVLLVIGVI), 153-173 (ELFGFGTLMGFRIIPQFVYAS), and 183-203 (LSLMVLAPSAFFLLGIMIWLV).

Belongs to the NqrDE/RnfAE family. In terms of assembly, composed of six subunits; NqrA, NqrB, NqrC, NqrD, NqrE and NqrF.

It is found in the cell inner membrane. The enzyme catalyses a ubiquinone + n Na(+)(in) + NADH + H(+) = a ubiquinol + n Na(+)(out) + NAD(+). In terms of biological role, NQR complex catalyzes the reduction of ubiquinone-1 to ubiquinol by two successive reactions, coupled with the transport of Na(+) ions from the cytoplasm to the periplasm. NqrA to NqrE are probably involved in the second step, the conversion of ubisemiquinone to ubiquinol. This chain is Na(+)-translocating NADH-quinone reductase subunit D, found in Chlamydia pneumoniae (Chlamydophila pneumoniae).